Reading from the N-terminus, the 61-residue chain is Conotoxin LiC32 (61 aa).

The signal sequence occupies residues 1-22 (MRCVPVFIILLLLSPSAPSVDA). The propeptide occupies 23–44 (HPKTKDDVPLASFHDDAKRTLQ). Cys60 carries the cysteine amide modification.

This sequence belongs to the conotoxin T superfamily. Contains 2 disulfide bonds that can be either 'C1-C3, C2-C4' or 'C1-C4, C2-C3', since these disulfide connectivities have been observed for conotoxins with cysteine framework V (for examples, see AC P0DQQ7 and AC P81755). In terms of tissue distribution, expressed by the venom duct.

It localises to the secreted. In terms of biological role, has the ability to interact with the G-protein coupled somatostatin type 3 receptor (SSTR3). The ability was measured in competition binding experiments and the constant of inhibition (Ki) has been evaluated to be 3.5 uM. This is Conotoxin LiC32 from Conus lividus (Livid cone).